We begin with the raw amino-acid sequence, 1102 residues long: Voltage-gated delayed rectifier potassium channel KCNH8 (1102 aa).

Residues 1-225 (MPVMKGLLAP…HFSTFKAGWD (225 aa)) lie on the Cytoplasmic side of the membrane. Residues 18–90 (IATRFDGTHS…LQIEKSLEEK (73 aa)) form the PAS domain. Residues 93–145 (FKGEIMFYKKNGAPFWCLLDIVPIKNEKGDVVLFLASFKDITDTKVKITSEDK) form the PAC domain. Residues 226–246 (WLILLATFYVAVTVPYNVCFI) form a helical membrane-spanning segment. Over 247 to 255 (GNEDLSTTR) the chain is Extracellular. Residues 256 to 276 (STTVSDIAVEILFIIDIILNF) form a helical membrane-spanning segment. At 277-298 (RTTYVSKSGQVIFEARSICIHY) the chain is on the cytoplasmic side. Residues 299–319 (VTTWFIIDLIAALPFDLLYAF) form a helical membrane-spanning segment. Asparagine 320 carries N-linked (GlcNAc...) asparagine glycosylation. Residues 320-327 (NVTVVSLV) lie on the Extracellular side of the membrane. The chain crosses the membrane as a helical; Voltage-sensor span at residues 328-348 (HLLKTVRLLRLLRLLQKLDRY). The Cytoplasmic portion of the chain corresponds to 349–353 (SQHST). A helical transmembrane segment spans residues 354–374 (IVLTLLMSMFALLAHWMACIW). Topologically, residues 375 to 419 (YVIGKMEREDNSLLKWEVGWLHELGKRLESPYYGNNTLGGPSIRS) are extracellular. Asparagine 409 is a glycosylation site (N-linked (GlcNAc...) asparagine). An intramembrane region (pore-forming) is located at residues 420-440 (AYIAALYFTLSSLTSVGFGNV). The short motif at 434 to 439 (SVGFGN) is the Selectivity filter element. Topologically, residues 441–448 (SANTDAEK) are extracellular. Residues 449–469 (IFSICTMLIGALMHALVFGNV) traverse the membrane as a helical segment. The Cytoplasmic portion of the chain corresponds to 470-1102 (TAIIQRMYSR…DVKDSKAINV (633 aa)). The cNMP-binding domain stretch occupies residues 551–668 (LFECASRGCL…HKFVEDIQHD (118 aa)). Disordered stretches follow at residues 683-744 (SRLS…KTGS), 762-793 (PFHS…KEKN), 818-845 (EDGN…ISPS), and 960-983 (LVGS…LHHS). The span at 710-723 (VEDEEEEEVEEEET) shows a compositional bias: acidic residues. Basic and acidic residues predominate over residues 777–793 (TKQEADPPNHGTRKEKN). Over residues 968 to 982 (TEAHEQSPVDSELHH) the composition is skewed to basic and acidic residues.

Belongs to the potassium channel family. H (Eag) (TC 1.A.1.20) subfamily. Kv12.1/KCNH8 sub-subfamily. The potassium channel is probably composed of a homo- or heterotetrameric complex of pore-forming alpha subunits that can associate with modulating beta subunits. As to expression, detected in superior cervical, mesenteric and coeliac ganglia. Expressed in brain (piriform cortex, olfactory tubercle, cerebral cortex, hippocampus pyramidial cells and dentate gyrus and basal ganglia of caudate/putamen and accumbens nucleus). Expressed in pituitary.

The protein resides in the membrane. It carries out the reaction K(+)(in) = K(+)(out). Pore-forming (alpha) subunit of a voltage-gated delayed rectifier potassium channel that mediates outward-rectifying potassium currents. Elicits a slowly activating, non-inactivating and slowly deactivation outwards potassium current at depolarizating voltages from -30 mV to +50mV. Shows no obvious change in the activation rate from different holding potentials. Activation is strongly dependent on the pH of the external solution. The polypeptide is Voltage-gated delayed rectifier potassium channel KCNH8 (Rattus norvegicus (Rat)).